Reading from the N-terminus, the 115-residue chain is Large ribosomal subunit protein bL19 (115 aa).

Belongs to the bacterial ribosomal protein bL19 family.

Functionally, this protein is located at the 30S-50S ribosomal subunit interface and may play a role in the structure and function of the aminoacyl-tRNA binding site. The chain is Large ribosomal subunit protein bL19 from Clostridium tetani (strain Massachusetts / E88).